The sequence spans 287 residues: Ciliary microtubule inner protein 6 (287 aa).

2 stretches are compositionally biased toward basic and acidic residues: residues 1–15 (MEEK…KIED) and 25–34 (EEIKHEEKPG). Residues 1–42 (MEEKEDKHQQHKIEDAAITYVSENEEIKHEEKPGKSIHHSKS) form a disordered region. Residues 128–160 (GIVPLASPGTSAELQNNFIEYISFIHQYDARKT) form a mn 1 region. Residues 179-287 (KPGSRPTVPK…PLNPPIKKSE (109 aa)) are disordered. Basic and acidic residues-rich tracts occupy residues 203–212 (EQSKKTEKGN) and 232–245 (LEPK…DVRQ). The interval 213–246 (SAESRMISPGLCQQNSQELLEPKTHLSETDVRQA) is mn 2.

The protein localises to the cell projection. The protein resides in the cilium. The protein is Ciliary microtubule inner protein 6 of Homo sapiens (Human).